The primary structure comprises 200 residues: Coiled-coil domain-containing protein 28B (200 aa).

Position 1 is an N-acetylmethionine (Met1). Over residues Met1–Pro10 the composition is skewed to basic residues. The segment at Met1–Gln49 is disordered. A phosphoserine mark is found at Ser46 and Ser115. Positions Glu141 to Val152 are enriched in acidic residues. The tract at residues Glu141–Met164 is disordered. Residues Glu158–Ile183 adopt a coiled-coil conformation.

In terms of assembly, interacts with BBS1, BBS2, BBS4, BBS5, BBS6, BBS7 and TTC8/BBS8. Interacts with MAPKAP1/SIN1 isoform 1 and RICTOR.

It is found in the cytoplasm. Its subcellular location is the cytoskeleton. The protein resides in the microtubule organizing center. It localises to the centrosome. Its function is as follows. Involved in ciliogenesis. Regulates cilia length through its interaction with MAPKAP1/SIN1 but independently of mTORC2 complex. Modulates mTORC2 complex assembly and function, possibly enhances AKT1 phosphorylation. Does not seem to modulate assembly and function of mTORC1 complex. This is Coiled-coil domain-containing protein 28B (CCDC28B) from Homo sapiens (Human).